The chain runs to 157 residues: uncharacterized protein (157 aa).

Positions 1–28 (MKRLFMKASLVLFAVVFVFAVKGAPAKA) are cleaved as a signal peptide.

This is an uncharacterized protein from Bacillus subtilis (strain 168).